A 66-amino-acid polypeptide reads, in one-letter code: Toxin Cll1 (66 aa).

In terms of domain architecture, LCN-type CS-alpha/beta spans 1-66; it reads KEGYLVNKST…TYPLPNKSCS (66 aa). 4 cysteine pairs are disulfide-bonded: Cys12-Cys65, Cys16-Cys41, Cys25-Cys46, and Cys29-Cys48.

It belongs to the long (4 C-C) scorpion toxin superfamily. Sodium channel inhibitor family. Beta subfamily. Expressed by the venom gland.

The protein localises to the secreted. In terms of biological role, beta toxin that binds site-4 of sodium channels (Nav) and reduces peak current (observed on Nav1.1/SCN1A, Nav1.2/SCN2A, Nav1.3/SCN3A, Nav1.4/SCN5A, Nav1.5/SCN4A, and Nav1.6/SCN8A (IC(50)=44.9 nM)), shifts the voltage of activation toward more negative potentials (observed on Nav1.6, Nav1.1 (weak), Nav1.2 (weak), and Nav1.7 (weak)), and induces resurgent currents at negative voltages following brief and strong depolarizations (observed on Nav1.6, Nav1.1 (weak), Nav1.2 (weak), and Nav1.4 (weak)). This toxin is only active on crustaceans. This is Toxin Cll1 from Centruroides limpidus (Mexican scorpion).